The sequence spans 421 residues: UDP-N-acetylglucosamine 1-carboxyvinyltransferase 2 (421 aa).

22–23 (KN) provides a ligand contact to phosphoenolpyruvate. Arginine 94 provides a ligand contact to UDP-N-acetyl-alpha-D-glucosamine. The Proton donor role is filled by cysteine 118. Cysteine 118 is subject to 2-(S-cysteinyl)pyruvic acid O-phosphothioketal. Aspartate 308 and isoleucine 330 together coordinate UDP-N-acetyl-alpha-D-glucosamine.

Belongs to the EPSP synthase family. MurA subfamily.

The protein localises to the cytoplasm. It carries out the reaction phosphoenolpyruvate + UDP-N-acetyl-alpha-D-glucosamine = UDP-N-acetyl-3-O-(1-carboxyvinyl)-alpha-D-glucosamine + phosphate. The protein operates within cell wall biogenesis; peptidoglycan biosynthesis. Functionally, cell wall formation. Adds enolpyruvyl to UDP-N-acetylglucosamine. The sequence is that of UDP-N-acetylglucosamine 1-carboxyvinyltransferase 2 from Lactococcus lactis subsp. lactis (strain IL1403) (Streptococcus lactis).